Consider the following 205-residue polypeptide: MDELTPRQSEILAWIRARMAEDSLPPTRAELMRAFDFRSPNAAESHLRVLARKGYILLQSGTARGIRLCASEEETGLPLIGRVAAGQPMLAEEFREGQLPVDPKLFSPGADYLLRVQGMSMRDAGILDGDILAVRHDASLTLQDGQMVVARVNGEVTVKRWKRDGKQVWLLPENPDFSPISVDLQRDSLTIEGVVVGLLRIGGNL.

The H-T-H motif DNA-binding region spans 28–48; that stretch reads RAELMRAFDFRSPNAAESHLR. Residues Ser120 and Lys159 each act as for autocatalytic cleavage activity in the active site.

It belongs to the peptidase S24 family. In terms of assembly, homodimer.

It carries out the reaction Hydrolysis of Ala-|-Gly bond in repressor LexA.. In terms of biological role, represses a number of genes involved in the response to DNA damage (SOS response), including recA and lexA. In the presence of single-stranded DNA, RecA interacts with LexA causing an autocatalytic cleavage which disrupts the DNA-binding part of LexA, leading to derepression of the SOS regulon and eventually DNA repair. This is LexA repressor from Acidithiobacillus ferrooxidans (strain ATCC 23270 / DSM 14882 / CIP 104768 / NCIMB 8455) (Ferrobacillus ferrooxidans (strain ATCC 23270)).